The sequence spans 266 residues: Interleukin-1 beta (266 aa).

Positions 1–113 (MATVPEPINE…ETSSDELLCD (113 aa)) are excised as a propeptide.

This sequence belongs to the IL-1 family. In terms of assembly, monomer. In its precursor form, weakly interacts with full-length MEFV; the mature cytokine does not interact at all. Interacts with integrins ITGAV:ITGBV and ITGA5:ITGB1; integrin-binding is required for IL1B signaling. Interacts with cargo receptor TMED10; the interaction is direct and is required for the secretion of IL1B mature form. Interacts with HSP90AB1; the interaction facilitates cargo translocation into the ERGIC. Interacts with HSP90B1; the interaction facilitates cargo translocation into the ERGIC.

Its subcellular location is the cytoplasm. The protein resides in the cytosol. The protein localises to the secreted. It is found in the lysosome. It localises to the extracellular exosome. In terms of biological role, potent pro-inflammatory cytokine. Initially discovered as the major endogenous pyrogen, induces prostaglandin synthesis, neutrophil influx and activation, T-cell activation and cytokine production, B-cell activation and antibody production, and fibroblast proliferation and collagen production. Promotes Th17 differentiation of T-cells. Synergizes with IL12/interleukin-12 to induce IFNG synthesis from T-helper 1 (Th1) cells. Plays a role in angiogenesis by inducing VEGF production synergistically with TNF and IL6. Involved in transduction of inflammation downstream of pyroptosis: its mature form is specifically released in the extracellular milieu by passing through the gasdermin-D (GSDMD) pore. The polypeptide is Interleukin-1 beta (IL1B) (Ovis aries (Sheep)).